The sequence spans 297 residues: Trans-enoyl reductase TOXD (297 aa).

Residues 162–165 (STAT) and Tyr-203 each bind NADP(+).

The protein belongs to the zinc-containing alcohol dehydrogenase family. Monomer.

Its function is as follows. Trans-enoyl reductase; part of the diffuse TOX2 gene cluster that mediates the biosynthesis of the HC-toxin, cyclic tetrapeptide of structure cyclo(D-Pro-L-Ala-D-Ala-L-Aeo), where Aeo stands for 2-amino-9,10-epoxi-8-oxodecanoic acid. HC-toxin is a determinant of specificity and virulence in the interaction between the producing fungus and its host, maize. TOXD does not seem to play a role in HC-toxin biosynthesis. This Cochliobolus carbonum (Maize leaf spot fungus) protein is Trans-enoyl reductase TOXD.